The chain runs to 93 residues: Acylphosphatase (93 aa).

The cysteines at positions 5 and 49 are disulfide-linked. The region spanning 5–93 is the Acylphosphatase-like domain; that stretch reads CIIAWVYGRV…ETLTGFSIRY (89 aa). Active-site residues include arginine 20 and asparagine 38.

This sequence belongs to the acylphosphatase family.

It carries out the reaction an acyl phosphate + H2O = a carboxylate + phosphate + H(+). The protein is Acylphosphatase of Salmonella typhi.